The sequence spans 464 residues: Glycine receptor subunit alpha-3 (464 aa).

A signal peptide spans 1–33 (MAHVRHFRTLVSGFYFWEAALLLSLVATKETDS). The Extracellular portion of the chain corresponds to 34-255 (ARSRSAPMSP…RFHLERQMGY (222 aa)). The N-linked (GlcNAc...) asparagine glycan is linked to Asn-71. Cys-171 and Cys-185 are disulfide-bonded. Zn(2+)-binding residues include Glu-225 and Asp-227. Residues Cys-231 and Cys-242 are joined by a disulfide bond. 235-240 (YNTGKF) provides a ligand contact to strychnine. His-248 serves as a coordination point for Zn(2+). The chain crosses the membrane as a helical span at residues 256-277 (YLIQMYIPSLLIVILSWVSFWI). Residues 278–282 (NMDAA) are Cytoplasmic-facing. Residues 283 to 303 (PARVALGITTVLTMTTQSSGS) traverse the membrane as a helical segment. Topologically, residues 304–314 (RASLPKVSYVK) are extracellular. Residues 315–335 (AIDIWMAVCLLFVFSALLEYA) form a helical membrane-spanning segment. At 336-430 (AVNFVSRQHK…FIDRAKKIDT (95 aa)) the chain is on the cytoplasmic side. Phosphoserine occurs at positions 370 and 379. A helical transmembrane segment spans residues 431 to 451 (ISRACFPLAFLIFNIFYWVIY). At 452 to 464 (KILRHEDIHQQQD) the chain is on the extracellular side.

Belongs to the ligand-gated ion channel (TC 1.A.9) family. Glycine receptor (TC 1.A.9.3) subfamily. GLRA3 sub-subfamily. In terms of assembly, homopentamer (in vitro). Heteropentamer composed of GLRA3 and GLRB. Both homopentamers and heteropentamers form functional ion channels, but their characteristics are subtly different. Phosphorylated by PKA; this causes down-regulation of channel activity. As to expression, widely distributed throughout the central nervous system.

It is found in the postsynaptic cell membrane. Its subcellular location is the perikaryon. The protein localises to the cell projection. The protein resides in the dendrite. It localises to the synapse. It is found in the cell membrane. It carries out the reaction chloride(in) = chloride(out). Glycine receptors are ligand-gated chloride channels. Channel opening is triggered by extracellular glycine. Channel characteristics depend on the subunit composition; heteropentameric channels display faster channel closure. Plays an important role in the down-regulation of neuronal excitability. Contributes to the generation of inhibitory postsynaptic currents. Contributes to increased pain perception in response to increased prostaglandin E2 levels. Plays a role in cellular responses to ethanol. The sequence is that of Glycine receptor subunit alpha-3 (GLRA3) from Homo sapiens (Human).